The sequence spans 881 residues: Valine--tRNA ligase (881 aa).

Residues 48 to 58 (PNITGKLHLGH) carry the 'HIGH' region motif. The 'KMSKS' region signature appears at 527–531 (KMSKS). Residue K530 coordinates ATP. Coiled coils occupy residues 721-747 (KNET…AEMN) and 811-881 (LLDL…AALK).

The protein belongs to the class-I aminoacyl-tRNA synthetase family. ValS type 1 subfamily. As to quaternary structure, monomer.

It is found in the cytoplasm. It carries out the reaction tRNA(Val) + L-valine + ATP = L-valyl-tRNA(Val) + AMP + diphosphate. Its function is as follows. Catalyzes the attachment of valine to tRNA(Val). As ValRS can inadvertently accommodate and process structurally similar amino acids such as threonine, to avoid such errors, it has a 'posttransfer' editing activity that hydrolyzes mischarged Thr-tRNA(Val) in a tRNA-dependent manner. This Clostridium acetobutylicum (strain ATCC 824 / DSM 792 / JCM 1419 / IAM 19013 / LMG 5710 / NBRC 13948 / NRRL B-527 / VKM B-1787 / 2291 / W) protein is Valine--tRNA ligase.